We begin with the raw amino-acid sequence, 1099 residues long: MMSFNLILILIIFLILIQNYVIDGNDNFNLIKCPDEIPNLKKWSNYKSWKKLKLPIKGESINITTPILMDIKPPDLDVIRIFDKGMLVWKHINNLELRVKAILIYDGGQLIIGSEQCKFKYKATITLIGDSIYTEINQTINGNEYGQKVIGIDNGGTIELHSEVTKTTWTKLISTISPSTFNSNKNILTLLDNVNDWPIGSEILITSTDYDMEQSETNFIVKCSTCKTNQIKLKNPIKYLHWGSITKGVDERAEVALLTRNIKIQGQVGKTCVNNKLVCDFFPFDSFGAHIMIRKGFVNAHFFGIELFNVGQSHVVSRYPIHFHLCDRVDELGGYENPAYIKHCSVHKSFSRCYVVHSTDGLLIHDNIGFDSIGHCYMLCDGIEMDNVFSHNLGAVTRYGLLFPHDRSCDMCSRIQPNDFNGNPTQCTECNAVSTFWISNPWNTLIDNVASGSDSTGIWYLFSDYPSGLSHERGIKYNIKPYLIPVKKFYNNNVHSCTNGIQIDGGVKLTPPSKTQPQQLNSMINARYKPRSNPKNPNSKPSPSIFNGATIYKNKWRGCWARGGFLFMKNFKIADNAIGFTFASEGTIPGDQNVGQYIYKSLIVGESDNIGQQSNNIPIVNGRTNPYGENGLMPIRGFEIYDGTISLDSMVFSEFKSLPPLFRNSSAIGFLRFNDWQSSSETTIKNIKYINVDKEIHFEQSLMDGDKISTLRDLDGSTTKLSNSILVRNLLFYSTNNCYYKKPWDALICKEDTRQIYICNDDTNSTNYLSLSSSVVAIRDNIENQKIEQIGLPNHSPRNRFQFLVFKNHHYDFHFPNHPTPPILRVQPMNWKQSEKFTFGICIGISKGINLKVLKTVNGTYGNSNFVEELYPTFSMNLISESTYYFNEITSMLYIMYYQYNSKDHLNYCPEYGCEELVIKISGKNSGRVTGDCQSLAYGSSFTLFDEVVNRKFENSFQMDKSIIHNSEYAYRGNAYLPYHPTSKSQIQFKCNHCIPSVGIKYFEIWVNGNRNSNQRISIQLFYSINSNQLKSQPFAIDKNYFKKNSWVLVRILFENLKNLLPENHIHLISSFDGLSIINSLELNQPSLFLDNIKFIYDN.

The signal sequence occupies residues 1–24 (MMSFNLILILIIFLILIQNYVIDG). In terms of domain architecture, G8 spans 47–174 (KSWKKLKLPI…TKTTWTKLIS (128 aa)). N-linked (GlcNAc...) asparagine glycosylation is found at Asn62, Asn137, Asn664, Asn764, and Asn858.

It belongs to the CEMIP family.

The chain is Protein DDB_G0287365 from Dictyostelium discoideum (Social amoeba).